The chain runs to 179 residues: ATP synthase subunit delta (179 aa).

It belongs to the ATPase delta chain family. In terms of assembly, F-type ATPases have 2 components, F(1) - the catalytic core - and F(0) - the membrane proton channel. F(1) has five subunits: alpha(3), beta(3), gamma(1), delta(1), epsilon(1). F(0) has three main subunits: a(1), b(2) and c(10-14). The alpha and beta chains form an alternating ring which encloses part of the gamma chain. F(1) is attached to F(0) by a central stalk formed by the gamma and epsilon chains, while a peripheral stalk is formed by the delta and b chains.

Its subcellular location is the cell membrane. In terms of biological role, f(1)F(0) ATP synthase produces ATP from ADP in the presence of a proton or sodium gradient. F-type ATPases consist of two structural domains, F(1) containing the extramembraneous catalytic core and F(0) containing the membrane proton channel, linked together by a central stalk and a peripheral stalk. During catalysis, ATP synthesis in the catalytic domain of F(1) is coupled via a rotary mechanism of the central stalk subunits to proton translocation. Its function is as follows. This protein is part of the stalk that links CF(0) to CF(1). It either transmits conformational changes from CF(0) to CF(1) or is implicated in proton conduction. The polypeptide is ATP synthase subunit delta (Metamycoplasma arthritidis (strain 158L3-1) (Mycoplasma arthritidis)).